We begin with the raw amino-acid sequence, 401 residues long: Argininosuccinate synthase (401 aa).

ATP contacts are provided by residues 11 to 19 (AYSGGLDTS) and Ala-38. 2 residues coordinate L-citrulline: Tyr-89 and Ser-94. An ATP-binding site is contributed by Gly-119. L-aspartate contacts are provided by Thr-121, Asn-125, and Asp-126. Residue Asn-125 coordinates L-citrulline. 5 residues coordinate L-citrulline: Arg-129, Ser-177, Ser-186, Glu-262, and Tyr-274.

The protein belongs to the argininosuccinate synthase family. Type 1 subfamily. Homotetramer.

It is found in the cytoplasm. It carries out the reaction L-citrulline + L-aspartate + ATP = 2-(N(omega)-L-arginino)succinate + AMP + diphosphate + H(+). Its pathway is amino-acid biosynthesis; L-arginine biosynthesis; L-arginine from L-ornithine and carbamoyl phosphate: step 2/3. This is Argininosuccinate synthase from Nitratidesulfovibrio vulgaris (strain DSM 19637 / Miyazaki F) (Desulfovibrio vulgaris).